We begin with the raw amino-acid sequence, 258 residues long: Probable S-methyl-5'-thioinosine phosphorylase (258 aa).

Residue 53–54 (RH) coordinates phosphate. Methionine 180 lines the substrate pocket. A phosphate-binding site is contributed by threonine 181. 204 to 206 (NQA) contacts substrate.

It belongs to the PNP/MTAP phosphorylase family. MTAP subfamily. Homotrimer.

It catalyses the reaction S-methyl-5'-thioinosine + phosphate = 5-(methylsulfanyl)-alpha-D-ribose 1-phosphate + hypoxanthine. Its pathway is purine metabolism; purine nucleoside salvage. Catalyzes the reversible phosphorylation of S-methyl-5'-thioinosine (MTI) to hypoxanthine and 5-methylthioribose-1-phosphate. Involved in the breakdown of S-methyl-5'-thioadenosine (MTA), a major by-product of polyamine biosynthesis. Catabolism of (MTA) occurs via deamination to MTI and phosphorolysis to hypoxanthine. This is Probable S-methyl-5'-thioinosine phosphorylase from Methanosarcina acetivorans (strain ATCC 35395 / DSM 2834 / JCM 12185 / C2A).